Here is a 716-residue protein sequence, read N- to C-terminus: Leucine-rich repeat neuronal protein 1 (716 aa).

An N-terminal signal peptide occupies residues 1–25 (MARLSTGKAACQVVLGLLITSLTES). In terms of domain architecture, LRRNT spans 26–72 (SILTSECPQLCVCEIRPWFTPQSTYREATTVDCNDLRLTRIPGNLSS). The Extracellular portion of the chain corresponds to 26 to 631 (SILTSECPQL…DISDHETSTA (606 aa)). N-linked (GlcNAc...) asparagine glycosylation occurs at Asn69. LRR repeat units lie at residues 73-95 (DTQVLLLQSNNIAKTVDELQQLF), 96-117 (NLTELDFSQNNFTNIKEVGLAN), 120-141 (QLTTLHLEENQISEMTDYCLQD), 144-165 (NLQELYINHNQISTISANAFSG), 168-189 (NLLRLHLNSNKLKVIDSRWFDS), 192-213 (NLEILMIGENPVIGILDMNFRP), 216-237 (NLRSLVLAGMYLTDVPGNALVG), 240-261 (SLESLSFYDNKLIKVPQLALQK), and 264-285 (NLKFLDLNKNPIHKIQEGDFKN). Asn96 and Asn117 each carry an N-linked (GlcNAc...) asparagine glycan. The 54-residue stretch at 371–424 (NPLRCDCVIHWINSNKTNIRFMEPLSMFCAMPPEYRGQQVKEVLIQDSSEQCLP) folds into the LRRCT domain. Residue Asn385 is glycosylated (N-linked (GlcNAc...) asparagine). The Ig-like C2-type domain occupies 424–515 (PMISHDTFPN…GADTRVATIK (92 aa)). Cys447 and Cys499 form a disulfide bridge. N-linked (GlcNAc...) asparagine glycosylation is present at Asn517. In terms of domain architecture, Fibronectin type-III spans 525 to 619 (QVLKIYVKQT…VNVTTKTAAF (95 aa)). The chain crosses the membrane as a helical span at residues 632-652 (LAAVMGSMFAVISLASIAIYI). The Cytoplasmic segment spans residues 653–716 (AKRFKRKNYH…VDTSRSYYMW (64 aa)). The segment at 692-716 (SDKDKDGSADTKPTQVDTSRSYYMW) is disordered. Residues 702–716 (TKPTQVDTSRSYYMW) show a composition bias toward polar residues.

Expressed in brain.

It is found in the membrane. The chain is Leucine-rich repeat neuronal protein 1 (Lrrn1) from Mus musculus (Mouse).